A 349-amino-acid chain; its full sequence is Phenylalanine--tRNA ligase alpha subunit (349 aa).

Position 259 (Glu259) interacts with Mg(2+).

It belongs to the class-II aminoacyl-tRNA synthetase family. Phe-tRNA synthetase alpha subunit type 1 subfamily. In terms of assembly, tetramer of two alpha and two beta subunits. Requires Mg(2+) as cofactor.

The protein resides in the cytoplasm. It catalyses the reaction tRNA(Phe) + L-phenylalanine + ATP = L-phenylalanyl-tRNA(Phe) + AMP + diphosphate + H(+). The sequence is that of Phenylalanine--tRNA ligase alpha subunit from Lactobacillus helveticus (strain DPC 4571).